Here is a 435-residue protein sequence, read N- to C-terminus: Centrosomal protein of 55 kDa (435 aa).

Disordered stretches follow at residues 1-63 (MAAK…TDKA), 213-239 (HKEA…KVSR), and 268-287 (ERRR…ALLQ). 2 coiled-coil regions span residues 18–140 (SSSS…KNKY) and 185–373 (EAYV…RESR). Basic and acidic residues-rich tracts occupy residues 26 to 49 (AELE…DMKR) and 213 to 222 (HKEAKSDDQS).

It localises to the cytoplasm. Its subcellular location is the cytoskeleton. It is found in the microtubule organizing center. The protein resides in the centrosome. The protein localises to the centriole. It localises to the cleavage furrow. Its subcellular location is the midbody. It is found in the midbody ring. Its function is as follows. Plays a role in mitotic exit and cytokinesis. Recruits PDCD6IP and TSG101 to midbody during cytokinesis. Required for successful completion of cytokinesis. Not required for microtubule nucleation. Plays a role in the development of the brain and kidney. The polypeptide is Centrosomal protein of 55 kDa (Danio rerio (Zebrafish)).